Reading from the N-terminus, the 1066-residue chain is MDISGGNTSRQPQKKSNQNIQVYVRVRPLNSRERCIRSAEVVDVVGPREVVTRHTLDSKLTKKFTFDRSFGPESKQCDVYSVVVSPLIEEVLNGYNCTVFAYGQTGTGKTHTMVGNETAELKSSWEDDSDIGIIPRALSHLFDELRMMEVEYTMRISYLELYNEELCDLLSTDDTTKIRIFDDSTKKGSVIIQGLEEIPVHSKDDVYKLLEKGKERRKTATTLMNAQSSRSHTVFSIVVHIRENGIEGEDMLKIGKLNLVDLAGSENVSKAGNEKGIRVRETVNINQSLLTLGRVITALVDRAPHVPYRESKLTRLLQESLGGRTKTSIIATISPGHKDIEETLSTLEYAHRAKNIQNKPEVNQKLTKKTVLKEYTEEIDKLKRDLMAARDKNGIYLAEETYGEITLKLESQNRELNEKMLLLKALKDELQNKEKIFSEVSMSLVEKTQELKKTEENLLNTKGTLLLTKKVLTKTKRRYKEKKELVASHMKTEQVLTTQAQEILAAADLATDDTHQLHGTIERRRELDEKIRRSCDQFKDRMQDNLEMIGGSLNLYQDQQAALKEQLSQEMVNSSYVSQRLALNSSKSIEMLKEMCAQSLQDQTNLHNKLIGEVMKISDQHSQAFVAKLMEQMQQQQLLMSKEIQTNLQVIEENNQRHKAMLDSMQEKFATIIDSSLQSVEEHAKQMHKKLEQLGAMSLPDAEELQNLQEELANERALAQQEDALLESMMMQMEQIKNLRSKNSISMSVHLNKMEESRLTRNHRIDDIKSGIQDYQKLGIEASQSAQAELTSQMEAGMLCLDQGVANCSMLQVHMKNLNQKYEKETNENVGSVRVHHNQVEIICQESKQQLEAVQEKTEVNLEQMVDARQQLITEDRQRFIGHATVATDLVQESNRQFSEHAEHQRQQLQICEQELVRFQQSELKTYAPTGTTPSKRDFVYPRTLVATSPHQEIVRRYRQELDWSDLDTTATIDECSEGEHDVSMHSVQELSETETIMNSTPIEPVDGVTVKRGCGTTRNSNSNALKPPVATGGKRSSSLSRSLTPSKTSPRGSPAFVRHNKENVA.

The Kinesin motor domain maps to 19 to 356; the sequence is NIQVYVRVRP…LEYAHRAKNI (338 aa). 103 to 110 provides a ligand contact to ATP; sequence GQTGTGKT. The stretch at 362 to 462 forms a coiled coil; the sequence is VNQKLTKKTV…KTEENLLNTK (101 aa). Threonine 520 bears the Phosphothreonine mark. 4 coiled-coil regions span residues 540–569, 639–738, 808–875, and 889–918; these read DRMQ…QLSQ, LMSK…QIKN, CSML…LITE, and DLVQ…ELVR. Residue threonine 933 is modified to Phosphothreonine. Serine 949 carries the phosphoserine modification. The segment covering 990-1002 has biased composition (polar residues); it reads ELSETETIMNSTP. 2 disordered regions span residues 990-1009 and 1016-1066; these read ELSE…VDGV and GTTR…ENVA. Low complexity predominate over residues 1033–1051; it reads GGKRSSSLSRSLTPSKTSP. A Phosphoserine modification is found at serine 1043. A Phosphothreonine modification is found at threonine 1045. A phosphoserine mark is found at serine 1050 and serine 1054.

It belongs to the TRAFAC class myosin-kinesin ATPase superfamily. Kinesin family. BimC subfamily. In terms of assembly, homotetramer. Consists of two pairs of polypeptides associated by coiled-coil interactions to form two homodimers. The homodimers are linked by lateral interactions between their coiled-coil regions to form a bipolar homotetramer consisting of a central rod with two motor domains projecting from either end. Parallel coiled coils extend from each pair of motor heads, switch to two antiparallel coiled coils in the central region and then back to parallel coiled coils. Interacts with Wee1. In terms of processing, phosphorylation is required for localization to mitotic spindles. Phosphorylation of Thr-933 during mitosis controls association with the spindle apparatus. Phosphorylated in vitro by Wee1.

Its subcellular location is the cytoplasm. The protein resides in the cytoskeleton. The protein localises to the spindle. It localises to the spindle pole. Its function is as follows. Important role in mitotic dividing cells. Microtubule motor required for spindle body separation. Slow plus-end directed microtubule motor capable of cross-linking and sliding apart antiparallel microtubules, thereby pushing apart the associated spindle poles during spindle assembly and function. Forms cross-links between microtubules within interpolar microtubule bundles. Contributes to the length of the metaphase spindle, maintains the prometaphase spindle by antagonizing Ncd, drives anaphase B, and also contributes to normal chromosome congression, kinetochore spacing, and anaphase A rates. Displays microtubule-stimulated ATPase activity. Required for normal fusome organization. Required in non-mitotic cells for transport of secretory proteins from the Golgi complex to the cell surface. The chain is Kinesin-like protein Klp61F from Drosophila melanogaster (Fruit fly).